The chain runs to 2856 residues: Lipopolysaccharide-responsive and beige-like anchor protein (2856 aa).

Disordered stretches follow at residues 1–35 and 939–1107; these read MASEDNRAPSRPPTGDDGGGGGKEETPTEGGALSL and EQRK…DDDY. At Ala-2 the chain carries N-acetylalanine. Phosphoserine is present on residues Ser-10, Ser-979, and Ser-1003. Over residues 991-1009 the composition is skewed to polar residues; sequence ENSSIGRASSIDSASNTEL. The span at 1010-1026 shows a compositional bias: basic and acidic residues; the sequence is QTHDMSSDEKKVERENQ. Low complexity predominate over residues 1073-1082; that stretch reads SEVSASISSP. Ser-1097, Ser-1132, Ser-1136, Ser-1219, Ser-1221, Ser-1228, Ser-1244, and Ser-1258 each carry phosphoserine. A disordered region spans residues 1253-1296; sequence FELKASTSTEAPQPQRHGLEISRQQEQTAQGTAPDAVDQQRRDS. The segment covering 1274 to 1283 has biased composition (polar residues); sequence SRQQEQTAQG. A WD 1 repeat occupies 1298 to 1340; that stretch reads STMFRIPEFKWSQMHQRLLTDLLFSIETDIQMWRSHSTKTVMD. A phosphoserine mark is found at Ser-1487 and Ser-1497. The chain crosses the membrane as a helical span at residues 1529-1545; the sequence is AQFLALAVVYFISVLMV. 2 disordered regions span residues 1556–1621 and 1750–1778; these read DERH…LGSG and SAVSVVSSVDPTHASDTGGESPGSRSPKC. Over residues 1563–1573 the composition is skewed to polar residues; the sequence is LKETSSDNGNA. Residues 1586-1601 are compositionally biased toward low complexity; it reads SSLTLSSVEESLEGTS. A phosphoserine mark is found at Ser-1608, Ser-1770, Ser-1773, and Ser-2057. The 109-residue stretch at 2066–2174 folds into the BEACH-type PH domain; that stretch reads NLAGPVSLST…TVKKVVNYLP (109 aa). Residues 2193–2482 enclose the BEACH domain; it reads ATPRQLFKAS…QLLIEPHPPR (290 aa). Ser-2489 carries the phosphoserine modification. WD repeat units follow at residues 2584–2626, 2629–2672, 2688–2728, 2770–2809, and 2812–2851; these read DQSI…LIQV, GHWD…SGIG, GHDY…RTLE, ETDDHIRAIQLSRDGQYLLTGGDNGVVIVRQVSDLKQLFA, and GCDAGIRAMALSFDQRCIISGMASGSIVLFYNDFNRWHHE.

Interacts with TOM1 and TOLLIP. As to expression, isoform 1 is expressed in the brain, is absent from the lung and the bone marrow and is less abundant in the spleen. Isoform 2 is expressed in the spleen, lung, brain and bone marrow. Isoform 3 is expressed in the brain, is absent from the bone marrow and is less abundant in the spleen and lung.

It is found in the cell membrane. Its subcellular location is the endoplasmic reticulum membrane. The protein localises to the golgi apparatus. The protein resides in the trans-Golgi network membrane. It localises to the lysosome membrane. Involved in coupling signal transduction and vesicle trafficking to enable polarized secretion and/or membrane deposition of immune effector molecules. Involved in phagophore growth during mitophagy by regulating ATG9A trafficking to mitochondria. The protein is Lipopolysaccharide-responsive and beige-like anchor protein (Lrba) of Mus musculus (Mouse).